The chain runs to 26 residues: ATP synthase subunit gamma, mitochondrial (26 aa).

It belongs to the ATPase gamma chain family. In terms of assembly, F-type ATPases have 2 components, CF(1) - the catalytic core - and CF(0) - the membrane proton channel. CF(1) has five subunits: alpha(3), beta(3), gamma(1), delta(1), epsilon(1). CF(0) has three main subunits: a, b and c.

Its subcellular location is the mitochondrion. The protein localises to the mitochondrion inner membrane. Mitochondrial membrane ATP synthase (F(1)F(0) ATP synthase or Complex V) produces ATP from ADP in the presence of a proton gradient across the membrane which is generated by electron transport complexes of the respiratory chain. F-type ATPases consist of two structural domains, F(1) - containing the extramembraneous catalytic core, and F(0) - containing the membrane proton channel, linked together by a central stalk and a peripheral stalk. During catalysis, ATP synthesis in the catalytic domain of F(1) is coupled via a rotary mechanism of the central stalk subunits to proton translocation. Part of the complex F(1) domain and the central stalk which is part of the complex rotary element. The gamma subunit protrudes into the catalytic domain formed of alpha(3)beta(3). Rotation of the central stalk against the surrounding alpha(3)beta(3) subunits leads to hydrolysis of ATP in three separate catalytic sites on the beta subunits. This Spinacia oleracea (Spinach) protein is ATP synthase subunit gamma, mitochondrial (ATPC).